Here is an 87-residue protein sequence, read N- to C-terminus: Large ribosomal subunit protein bL27 (87 aa).

Belongs to the bacterial ribosomal protein bL27 family.

This Stenotrophomonas maltophilia (strain K279a) protein is Large ribosomal subunit protein bL27.